A 289-amino-acid chain; its full sequence is MTAQIINGKAIAEATLSETKSLIDKRLEKGLRAPTLAVILLGSDPASTIYVRNKRLACDKTGIRSLAYDLPDTTSEAELLALIKQLNQDDAVDGILVQSPLPAHIEEKKIIETISATKDVDGFHPYNIGRLAVRQPTLRSCTPYGVIKLLQSTGVRLLGLDAVVVGVSNHVGRPMALELLLAGCTVTSCHRHTKDLQASIARADIVVAAVGKPHLIKGEWIKPGAIVIDIGINRLADGSLCGDVEFDIAKTRAAWITPVPGGVGPMTVATLMQNTLTALELGESDQAPA.

NADP(+) is bound by residues 166 to 168 (GVS) and I232.

This sequence belongs to the tetrahydrofolate dehydrogenase/cyclohydrolase family. In terms of assembly, homodimer.

The catalysed reaction is (6R)-5,10-methylene-5,6,7,8-tetrahydrofolate + NADP(+) = (6R)-5,10-methenyltetrahydrofolate + NADPH. It catalyses the reaction (6R)-5,10-methenyltetrahydrofolate + H2O = (6R)-10-formyltetrahydrofolate + H(+). It functions in the pathway one-carbon metabolism; tetrahydrofolate interconversion. Functionally, catalyzes the oxidation of 5,10-methylenetetrahydrofolate to 5,10-methenyltetrahydrofolate and then the hydrolysis of 5,10-methenyltetrahydrofolate to 10-formyltetrahydrofolate. This chain is Bifunctional protein FolD, found in Methylobacillus flagellatus (strain ATCC 51484 / DSM 6875 / VKM B-1610 / KT).